A 90-amino-acid polypeptide reads, in one-letter code: DNA-directed RNA polymerase subunit omega (90 aa).

It belongs to the RNA polymerase subunit omega family. The RNAP catalytic core consists of 2 alpha, 1 beta, 1 beta' and 1 omega subunit. When a sigma factor is associated with the core the holoenzyme is formed, which can initiate transcription.

It carries out the reaction RNA(n) + a ribonucleoside 5'-triphosphate = RNA(n+1) + diphosphate. Promotes RNA polymerase assembly. Latches the N- and C-terminal regions of the beta' subunit thereby facilitating its interaction with the beta and alpha subunits. In Rhodopirellula baltica (strain DSM 10527 / NCIMB 13988 / SH1), this protein is DNA-directed RNA polymerase subunit omega.